The sequence spans 228 residues: Small ribosomal subunit protein uS7A (228 aa).

It belongs to the universal ribosomal protein uS7 family.

In Drosophila melanogaster (Fruit fly), this protein is Small ribosomal subunit protein uS7A (RpS5a).